The sequence spans 357 residues: MGPLRLLPTAVLLLAQAAPWEASQHCGRLEYWNPDNRCCGSCLQRFGPPPCADLEFSENCGLDDAGNHVMHPFQECPPGQCNRNSAELCSLCGGGATAPIPSGSRGGTGRPCREPVPNKEPCPLTPGKSSILSSQEPSSPGIPSVSWTSEHKAPQQAWPSLSFALFLVLVLLVTSAIILLALQRHHRRLDQGKAVQHPYPSLVCSDLDTHTRFLHLSSPASLETSEARDSWKEVSLSPLLGREMPSLESQPLSRLLDELEVLEELILLLDPEPGPGGRMACGTTRHLAARYGLPAAWSTFAYSLRPSRSPLRALIEMVVAREPSASLGQLGTHLAQIGRADALQVLSKLGSSGACLA.

The N-terminal stretch at 1-22 (MGPLRLLPTAVLLLAQAAPWEA) is a signal peptide. The Extracellular segment spans residues 23-160 (SQHCGRLEYW…HKAPQQAWPS (138 aa)). The disordered stretch occupies residues 100–147 (IPSGSRGGTGRPCREPVPNKEPCPLTPGKSSILSSQEPSSPGIPSVSW). Residues 129-139 (SSILSSQEPSS) show a composition bias toward low complexity. Residues 161-181 (LSFALFLVLVLLVTSAIILLA) traverse the membrane as a helical segment. Over 182–357 (LQRHHRRLDQ…KLGSSGACLA (176 aa)) the chain is Cytoplasmic.

Its subcellular location is the cell membrane. Probable cell membrane receptor for the IGF-like family protein IGFL. The polypeptide is IGF-like family receptor 1 (IGFLR1) (Bos taurus (Bovine)).